A 1273-amino-acid polypeptide reads, in one-letter code: DNA polymerase 037L (1273 aa).

Residues 679–837 (IRKNAITEEL…ENKSKEDIDE (159 aa)) are a coiled coil.

The protein belongs to the DNA polymerase type-B family.

The catalysed reaction is DNA(n) + a 2'-deoxyribonucleoside 5'-triphosphate = DNA(n+1) + diphosphate. Its function is as follows. DNA-directed DNA polymerase involved in viral DNA replication. In Invertebrate iridescent virus 6 (IIV-6), this protein is DNA polymerase 037L (DPOL).